Reading from the N-terminus, the 349-residue chain is Draxin (349 aa).

Positions 1–25 are cleaved as a signal peptide; sequence MAASSTFFSPSLFLCVLVLIDITLA. Residues 40-53 are compositionally biased toward polar residues; that stretch reads NHLQNQETWPQQPR. 3 disordered regions span residues 40 to 63, 119 to 166, and 246 to 273; these read NHLQ…HGLA, PHAE…LYKK, and WPSA…EGEP. The segment covering 54 to 63 has biased composition (basic residues); that stretch reads SGHHHKHGLA. Over residues 119 to 139 the composition is skewed to basic and acidic residues; that stretch reads PHAERENQSPGSERGKKQNRE. Composition is skewed to basic residues over residues 140–155 and 249–258; these read QRRH…HRGK and AKKKEKRRSK. Residue Asn-264 is glycosylated (N-linked (GlcNAc...) asparagine).

The protein belongs to the draxin family.

The protein resides in the secreted. Functionally, chemorepulsive axon guidance protein required for the development of spinal cord and forebrain commissures. Acts as a chemorepulsive guidance protein for commissural axons during development. Able to inhibit or repel neurite outgrowth from dorsal spinal cord and cortical explants in vitro. Binds directly to the neurites and growth cones. The protein is Draxin of Gallus gallus (Chicken).